A 277-amino-acid chain; its full sequence is Large ribosomal subunit protein uL2 (277 aa).

The tract at residues 222-277 is disordered; sequence GVAMNPVDHPHGGGEGRTSGGRHPVTPWGKPTKGKKTRSNKATDKFIMRSRHQRKK.

The protein belongs to the universal ribosomal protein uL2 family. In terms of assembly, part of the 50S ribosomal subunit. Forms a bridge to the 30S subunit in the 70S ribosome.

Functionally, one of the primary rRNA binding proteins. Required for association of the 30S and 50S subunits to form the 70S ribosome, for tRNA binding and peptide bond formation. It has been suggested to have peptidyltransferase activity; this is somewhat controversial. Makes several contacts with the 16S rRNA in the 70S ribosome. This chain is Large ribosomal subunit protein uL2, found in Brucella abortus (strain S19).